The chain runs to 256 residues: GDSL esterase/lipase CPRD49 (256 aa).

Positions 1–27 are cleaved as a signal peptide; it reads MVGPARPQIVLFGSSIVQMSFGHGGWG. Serine 15 (nucleophile) is an active-site residue. N-linked (GlcNAc...) asparagine glycans are attached at residues asparagine 49 and asparagine 79. The active site involves histidine 213. Asparagine 243 carries an N-linked (GlcNAc...) asparagine glycan.

Belongs to the 'GDSL' lipolytic enzyme family. As to expression, specifically expressed in anthers (stages 8-12).

Its subcellular location is the secreted. The protein is GDSL esterase/lipase CPRD49 (CPRD49) of Arabidopsis thaliana (Mouse-ear cress).